Here is a 206-residue protein sequence, read N- to C-terminus: Peptidyl-tRNA hydrolase (206 aa).

Tyr-14 is a tRNA binding site. The active-site Proton acceptor is the His-19. Residues Phe-64 and Asn-66 each contribute to the tRNA site. The interval 185-206 (VNGEAPKKSKDQAKEPANEQPR) is disordered. Residues 189 to 206 (APKKSKDQAKEPANEQPR) show a composition bias toward basic and acidic residues.

The protein belongs to the PTH family. In terms of assembly, monomer.

The protein localises to the cytoplasm. The enzyme catalyses an N-acyl-L-alpha-aminoacyl-tRNA + H2O = an N-acyl-L-amino acid + a tRNA + H(+). Its function is as follows. Hydrolyzes ribosome-free peptidyl-tRNAs (with 1 or more amino acids incorporated), which drop off the ribosome during protein synthesis, or as a result of ribosome stalling. Catalyzes the release of premature peptidyl moieties from peptidyl-tRNA molecules trapped in stalled 50S ribosomal subunits, and thus maintains levels of free tRNAs and 50S ribosomes. The protein is Peptidyl-tRNA hydrolase of Herpetosiphon aurantiacus (strain ATCC 23779 / DSM 785 / 114-95).